The primary structure comprises 496 residues: Glutamate--tRNA ligase (496 aa).

Positions 12-22 (PSPTGHLHIGN) match the 'HIGH' region motif. The 'KMSKS' region signature appears at 259–263 (KLSKR). Lys262 is a binding site for ATP.

The protein belongs to the class-I aminoacyl-tRNA synthetase family. Glutamate--tRNA ligase type 1 subfamily. Monomer.

The protein resides in the cytoplasm. It catalyses the reaction tRNA(Glu) + L-glutamate + ATP = L-glutamyl-tRNA(Glu) + AMP + diphosphate. Its function is as follows. Catalyzes the attachment of glutamate to tRNA(Glu) in a two-step reaction: glutamate is first activated by ATP to form Glu-AMP and then transferred to the acceptor end of tRNA(Glu). This chain is Glutamate--tRNA ligase, found in Lactiplantibacillus plantarum (strain ATCC BAA-793 / NCIMB 8826 / WCFS1) (Lactobacillus plantarum).